Here is a 580-residue protein sequence, read N- to C-terminus: Type 3 secretion system translocon protein SctE (580 aa).

IpgC chaperone binding domain regions lie at residues 15 to 45 and 51 to 72; these read KILT…IADL and INTT…APKS. A mediates interaction with human MAD2L2 region spans residues 61–70; it reads NILIPELKAP. A coiled-coil region spans residues 104 to 224; it reads AWKSQQQARQ…MQLEKEIDSF (121 aa). Helical transmembrane passes span 313 to 333 and 399 to 419; these read ILGA…GGAS and IGSI…VVLV.

The protein belongs to the SctE/SipB/YopB family. As to quaternary structure, the core secretion machinery of the T3SS is composed of approximately 20 different proteins, including cytoplasmic components, a base, an export apparatus and a needle. This subunit is involved in the formation of a pore, called the translocon, in host membrane. Interacts with IpaC/SctB. Interacts with the needle tip protein IpaD/SctA. Interacts with the molecular chaperone IpgC, which prevents premature association with IpaC/SctB within the cytoplasm of Shigella cells and protects IpaB/SctE from proteolysis. Interacts with the host protein ICE in the cytoplasm of infected macrophages. Interacts with human MAD2L2 in the G2/M phase of the cell cycle.

It localises to the secreted. It is found in the host membrane. The protein localises to the host cell. Its subcellular location is the host nucleus. With respect to regulation, interaction with the membrane is affected by the pH. IpaB/SctE is more efficient in destabilizing the membrane at pH 5.0 than at neutral pH. Functionally, component of the type III secretion system (T3SS), also called injectisome, which is used to inject bacterial effector proteins into eukaryotic host cells. IpaB/SctE and IpaC/SctB are inserted into the host membrane where they form a pore and allow the translocation of effector proteins into the cytosol of target cells. Interaction with IpaD/SctA at needle tips leads to the formation of the MxiH/SctF-IpaD/SctA-IpaB/SctE ternary complex, which is essential for host cell sensing. Interaction of IpaB/SctE with host membrane lipids promotes recruitment of IpaC/SctB at the needle tip concomitant with translocon insertion into the host membrane and type III secretion induction. Required for efficient dissemination. Necessary for lysis of the two cellular membranes that surround bacteria in protrusions during cell-to-cell spread. Is sufficient to induce macrophage apoptosis through activation of the interleukin-1 beta converting enzyme (ICE) in infected macrophages. In epithelial cells, causes cell-cycle arrest by targeting host MAD2L2, an anaphase-promoting complex/cyclosome (APC) inhibitor. This is Type 3 secretion system translocon protein SctE from Shigella flexneri.